The following is a 143-amino-acid chain: Large ribosomal subunit protein uL11 (143 aa).

This sequence belongs to the universal ribosomal protein uL11 family. As to quaternary structure, part of the ribosomal stalk of the 50S ribosomal subunit. Interacts with L10 and the large rRNA to form the base of the stalk. L10 forms an elongated spine to which L12 dimers bind in a sequential fashion forming a multimeric L10(L12)X complex. Post-translationally, one or more lysine residues are methylated.

Its function is as follows. Forms part of the ribosomal stalk which helps the ribosome interact with GTP-bound translation factors. In Koribacter versatilis (strain Ellin345), this protein is Large ribosomal subunit protein uL11.